Here is a 275-residue protein sequence, read N- to C-terminus: Diaminopimelate epimerase (275 aa).

Asn12, Gln45, and Asn65 together coordinate substrate. Cys74 serves as the catalytic Proton donor. Substrate-binding positions include Gly75–Asn76, Asn158, Asn191, and Glu209–Arg210. Cys218 functions as the Proton acceptor in the catalytic mechanism. A substrate-binding site is contributed by Gly219–Thr220.

The protein belongs to the diaminopimelate epimerase family. As to quaternary structure, homodimer.

It is found in the cytoplasm. It carries out the reaction (2S,6S)-2,6-diaminopimelate = meso-2,6-diaminopimelate. It functions in the pathway amino-acid biosynthesis; L-lysine biosynthesis via DAP pathway; DL-2,6-diaminopimelate from LL-2,6-diaminopimelate: step 1/1. In terms of biological role, catalyzes the stereoinversion of LL-2,6-diaminopimelate (L,L-DAP) to meso-diaminopimelate (meso-DAP), a precursor of L-lysine and an essential component of the bacterial peptidoglycan. This Shewanella putrefaciens (strain CN-32 / ATCC BAA-453) protein is Diaminopimelate epimerase.